The primary structure comprises 131 residues: Jacalin-related lectin 15 (131 aa).

Positions 1 to 126 (MSTPSGSNPL…LTSLGAYFAP (126 aa)) constitute a Jacalin-type lectin domain.

It belongs to the jacalin lectin family. As to expression, expressed in the vascular and surrounding tissues in cotyledons. Detected in root apical meristems.

The polypeptide is Jacalin-related lectin 15 (JAL15) (Arabidopsis thaliana (Mouse-ear cress)).